The following is a 236-amino-acid chain: Mitochondrial coenzyme A diphosphatase NUDT8 (236 aa).

Residues 25 to 172 form the Nudix hydrolase domain; the sequence is LRARPASAAV…HFRYTLPVFL (148 aa). K70 carries the post-translational modification N6-succinyllysine. Positions 70-91 match the Nudix box motif; sequence KCDPADQDVVHTALRETREELG. The Mg(2+) site is built by E85 and E89.

Belongs to the Nudix hydrolase family. As to quaternary structure, monomer. Requires Mg(2+) as cofactor. It depends on Mn(2+) as a cofactor.

The protein resides in the mitochondrion. It carries out the reaction an acyl-CoA + H2O = an acyl-4'-phosphopantetheine + adenosine 3',5'-bisphosphate + 2 H(+). It catalyses the reaction CoA + H2O = (R)-4'-phosphopantetheine + adenosine 3',5'-bisphosphate + 2 H(+). The enzyme catalyses acetyl-CoA + H2O = S-acetyl-4'-phosphopantetheine + adenosine 3',5'-bisphosphate + 2 H(+). The catalysed reaction is butanoyl-CoA + H2O = S-butanoyl-4'-phosphopantetheine + adenosine 3',5'-bisphosphate + 2 H(+). It carries out the reaction hexanoyl-CoA + H2O = hexanoyl-4'-phosphopantetheine + adenosine 3',5'-bisphosphate + 2 H(+). It catalyses the reaction octanoyl-CoA + H2O = S-octanoyl-4'-phosphopantetheine + adenosine 3',5'-bisphosphate + 2 H(+). The enzyme catalyses propanoyl-CoA + H2O = propanoyl-4'-phosphopantetheine + adenosine 3',5'-bisphosphate + 2 H(+). The catalysed reaction is malonyl-CoA + H2O = malonyl-4'-phosphopantetheine + adenosine 3',5'-bisphosphate + 2 H(+). It carries out the reaction succinyl-CoA + H2O = succinyl-4'-phosphopantetheine + adenosine 3',5'-bisphosphate + 2 H(+). It catalyses the reaction a 5'-end CoA-ribonucleoside in mRNA + H2O = a 5'-end phospho-adenosine-phospho-ribonucleoside in mRNA + (R)-4'-phosphopantetheine + 2 H(+). Acyl-CoA diphosphatase that mediates the hydrolysis of a wide range of CoA and CoA esters yielding 3',5'-ADP and the corresponding 4'-phosphopantetheine derivative as products. Hydrolyzes short- and medium-chain acyl-CoAs, exhibiting the highest activity toward free CoA, hexanoyl-CoA, and octanoyl-CoA and the lowest activity against acetyl-CoA. Exhibits decapping activity towards dpCoA-capped RNAs in vitro. The chain is Mitochondrial coenzyme A diphosphatase NUDT8 (NUDT8) from Homo sapiens (Human).